The chain runs to 199 residues: 3-isopropylmalate dehydratase small subunit (199 aa).

It belongs to the LeuD family. LeuD type 1 subfamily. Heterodimer of LeuC and LeuD.

The enzyme catalyses (2R,3S)-3-isopropylmalate = (2S)-2-isopropylmalate. The protein operates within amino-acid biosynthesis; L-leucine biosynthesis; L-leucine from 3-methyl-2-oxobutanoate: step 2/4. Catalyzes the isomerization between 2-isopropylmalate and 3-isopropylmalate, via the formation of 2-isopropylmaleate. The chain is 3-isopropylmalate dehydratase small subunit from Bacillus velezensis (strain DSM 23117 / BGSC 10A6 / LMG 26770 / FZB42) (Bacillus amyloliquefaciens subsp. plantarum).